A 111-amino-acid polypeptide reads, in one-letter code: Large ribosomal subunit protein bL21 (111 aa).

The protein belongs to the bacterial ribosomal protein bL21 family. Part of the 50S ribosomal subunit. Contacts protein L20.

This protein binds to 23S rRNA in the presence of protein L20. This Thermosynechococcus vestitus (strain NIES-2133 / IAM M-273 / BP-1) protein is Large ribosomal subunit protein bL21.